Here is a 775-residue protein sequence, read N- to C-terminus: Kinesin-like protein KIF3B (775 aa).

One can recognise a Kinesin motor domain in the interval 9–341; the sequence is SVKVVVRCRP…LRYANRAKNI (333 aa). Position 97–104 (97–104) interacts with ATP; sequence GQTGTGKT. The disordered stretch occupies residues 372-419; sequence KRSGRKRRRRRRRRVGEGGEEFEDGEDEEDDDDDDEDEEEGVDADKNI. The segment covering 374 to 385 has biased composition (basic residues); the sequence is SGRKRRRRRRRR. Acidic residues predominate over residues 389 to 413; that stretch reads GGEEFEDGEDEEDDDDDDEDEEEGV. The stretch at 501 to 591 forms a coiled coil; sequence LELKRQEIAE…QNELTRELKL (91 aa). Residues 716-775 form a disordered region; it reads FHASLGSSPGLSASAAGFSKKPKSGRPKTGKKVSTPTSAHSPLSGSGSPLYPQSRGLVPK. A compositionally biased stretch (low complexity) spans 718–734; the sequence is ASLGSSPGLSASAAGFS. The span at 735–746 shows a compositional bias: basic residues; it reads KKPKSGRPKTGK. A compositionally biased stretch (low complexity) spans 756–765; sequence SPLSGSGSPL.

This sequence belongs to the TRAFAC class myosin-kinesin ATPase superfamily. Kinesin family. Heterodimer of KIF3A and KIF3B. KIF3A/KIF3B heterodimer interacts with KIFAP3 forming a heterotrimeric (KIF3A/KIF3B/KIFAP3) complex.

The protein resides in the cytoplasm. The protein localises to the cytoskeleton. It localises to the cell projection. Its subcellular location is the cilium. It is found in the dendritic spine. Functionally, microtubule-based molecular motor that transport intracellular cargos, such as vesicles, organelles and protein complexes. Uses ATP hydrolysis to generate force to bind and move along the microtubule. Plays a role in cilia formation. Required for photoreceptor development. In Danio rerio (Zebrafish), this protein is Kinesin-like protein KIF3B.